Reading from the N-terminus, the 476-residue chain is Nuclear envelope morphology protein 1 (476 aa).

The segment at 47 to 74 (RRRSSYSASSLSSLSSKPTEKEVPTRNE) is disordered. Residues 51-62 (SYSASSLSSLSS) are compositionally biased toward low complexity. A compositionally biased stretch (basic and acidic residues) spans 64–74 (PTEKEVPTRNE). The helical transmembrane segment at 123–139 (FFWGLCRFVFFPVLLSY) threads the bilayer. Disordered stretches follow at residues 164–190 (SSHQ…SNGN) and 232–256 (GKAN…PAND). A compositionally biased stretch (polar residues) spans 234-256 (ANSNRSGHSHQPQSTQFSPPAND). N-linked (GlcNAc...) asparagine glycosylation is found at asparagine 237, asparagine 257, asparagine 284, and asparagine 356. The FCP1 homology domain occupies 299 to 460 (SKLPRKTLVL…LNLLSFLHAL (162 aa)).

It belongs to the Dullard family. Component of the nem1-spo7 complex.

The protein resides in the endoplasmic reticulum membrane. Its subcellular location is the nucleus membrane. The enzyme catalyses O-phospho-L-seryl-[protein] + H2O = L-seryl-[protein] + phosphate. It catalyses the reaction O-phospho-L-threonyl-[protein] + H2O = L-threonyl-[protein] + phosphate. Functionally, catalytic component of the nem1-spo7 complex which acts as a phosphatase and may be required for proper nuclear membrane morphology. This chain is Nuclear envelope morphology protein 1 (nem1), found in Schizosaccharomyces pombe (strain 972 / ATCC 24843) (Fission yeast).